Consider the following 164-residue polypeptide: Putative 4-hydroxy-4-methyl-2-oxoglutarate aldolase (164 aa).

Substrate is bound by residues 74-77 (GGNL) and arginine 96. Aspartate 97 is an a divalent metal cation binding site.

It belongs to the class II aldolase/RraA-like family. Homotrimer. Requires a divalent metal cation as cofactor.

The catalysed reaction is 4-hydroxy-4-methyl-2-oxoglutarate = 2 pyruvate. It carries out the reaction oxaloacetate + H(+) = pyruvate + CO2. In terms of biological role, catalyzes the aldol cleavage of 4-hydroxy-4-methyl-2-oxoglutarate (HMG) into 2 molecules of pyruvate. Also contains a secondary oxaloacetate (OAA) decarboxylase activity due to the common pyruvate enolate transition state formed following C-C bond cleavage in the retro-aldol and decarboxylation reactions. This chain is Putative 4-hydroxy-4-methyl-2-oxoglutarate aldolase, found in Thermus thermophilus (strain ATCC BAA-163 / DSM 7039 / HB27).